The following is a 268-amino-acid chain: Phosphatidylglycerol--prolipoprotein diacylglyceryl transferase (268 aa).

4 helical membrane passes run 14–34 (LGPI…FAGW), 57–77 (LTFY…IIFY), 90–110 (FFLW…LIAF), and 117–137 (IGAN…IGLG). Residue arginine 140 participates in a 1,2-diacyl-sn-glycero-3-phospho-(1'-sn-glycerol) binding. 3 helical membrane passes run 174–194 (QLFE…LVTI), 200–220 (YLVL…CEFF), and 240–260 (ILSI…FIKI).

The protein belongs to the Lgt family.

Its subcellular location is the cell inner membrane. The enzyme catalyses L-cysteinyl-[prolipoprotein] + a 1,2-diacyl-sn-glycero-3-phospho-(1'-sn-glycerol) = an S-1,2-diacyl-sn-glyceryl-L-cysteinyl-[prolipoprotein] + sn-glycerol 1-phosphate + H(+). Its pathway is protein modification; lipoprotein biosynthesis (diacylglyceryl transfer). Functionally, catalyzes the transfer of the diacylglyceryl group from phosphatidylglycerol to the sulfhydryl group of the N-terminal cysteine of a prolipoprotein, the first step in the formation of mature lipoproteins. This Francisella tularensis subsp. tularensis (strain FSC 198) protein is Phosphatidylglycerol--prolipoprotein diacylglyceryl transferase.